A 280-amino-acid polypeptide reads, in one-letter code: Alpha-methyl-mannoside-specific lectin (280 aa).

The N-terminal stretch at 1 to 26 (MAISKKILPLLSIATIFLLLLNKAHS) is a signal peptide. A carbohydrate is bound by residues aspartate 114 and glycine 134. The Mn(2+) site is built by glutamate 156 and aspartate 158. Ca(2+)-binding residues include aspartate 158 and phenylalanine 160. The a carbohydrate site is built by serine 165 and asparagine 166. 2 residues coordinate Ca(2+): asparagine 166 and aspartate 169. Aspartate 169 and histidine 174 together coordinate Mn(2+). A carbohydrate-binding residues include glycine 248 and glutamine 250.

The protein belongs to the leguminous lectin family. Homodimer. Post-translationally, glycosylated.

In terms of biological role, alpha-methyl-D-mannoside-specific lectin. Has hemagglutinating activity towards rabbit erythrocytes. Binds to cytokinins and significantly inhibits physiological effects of cytokinin activity such as cotyledon expansion and delayed leaf senescence. This is Alpha-methyl-mannoside-specific lectin from Arachis hypogaea (Peanut).